We begin with the raw amino-acid sequence, 477 residues long: TNF receptor-associated factor family protein DDB_G0278133 (477 aa).

The RING-type; degenerate zinc finger occupies 45–88 (CDICTLELFIESEPKALQCKEGHLACRRCWERYLSTNKQCMTCK). 2 consecutive TRAF-type zinc fingers follow at residues 160 to 211 (NHYK…SSLS) and 212 to 267 (DHHK…SKMQ). The stretch at 271–326 (LEHSVTKLMNQNEIIKKDNQNLDQEKKIEEIKLKLNNLLNNYIQLKNEIAVLKQNS) forms a coiled coil. In terms of domain architecture, MATH spans 331 to 463 (VYSNKWIIPE…FLNEKGELEI (133 aa)).

The protein belongs to the TNF receptor-associated factor family. A subfamily.

The protein localises to the cytoplasm. Its function is as follows. Probable adapter protein and signal transducer that links members of the tumor necrosis factor receptor family to different signaling pathways by association with the receptor cytoplasmic domain and kinases. In Dictyostelium discoideum (Social amoeba), this protein is TNF receptor-associated factor family protein DDB_G0278133.